We begin with the raw amino-acid sequence, 391 residues long: MVTQNKKILIITGSFGNGHMQVTQSIVNQLNDMNLDHLSVIEHDLFMEAHPILTSICKKWYINSFKYFRNMYKGFYYSRPDKLNKCFYKYYGLNKLINLLIKEKPDLILLTFPTPVMSVLTEQFNINIPVATVMTDYRLHKNWITPYSTRYYVATKETKQDFIDVGIDPSTVKVTGIPIDNKFETPINQKQWLIDNNLDPDKQTILMSAGAFGVSKGFDTMITDILAKSANAQVVMICGKSKELKRSLTAKFKSNENVLILGYTKHMNEWMASSQLMITKPGGITITEGFARCIPMIFLNPAPGQELENALYFEEKGFGKIADTPEEAIKIVASLTNGNEQLTNMISTMEQDKIKYATQTICQDLLDLIGHSSQPQEIYGKVPLYARFFVK.

The protein belongs to the glycosyltransferase 28 family. UgtP subfamily.

Its subcellular location is the cell membrane. It catalyses the reaction a 1,2-diacyl-3-O-(beta-D-glucopyranosyl)-sn-glycerol + UDP-alpha-D-glucose = a 1,2-diacyl-3-O-(beta-D-Glc-(1-&gt;6)-beta-D-Glc)-sn-glycerol + UDP + H(+). The catalysed reaction is a 1,2-diacyl-sn-glycerol + UDP-alpha-D-glucose = a 1,2-diacyl-3-O-(beta-D-glucopyranosyl)-sn-glycerol + UDP + H(+). It participates in glycolipid metabolism; diglucosyl-diacylglycerol biosynthesis. Functionally, processive glucosyltransferase involved in the biosynthesis of both the bilayer- and non-bilayer-forming membrane glucolipids. Is able to successively transfer two glucosyl residues to diacylglycerol (DAG), thereby catalyzing the formation of beta-monoglucosyl-DAG (3-O-(beta-D-glucopyranosyl)-1,2-diacyl-sn-glycerol) and beta-diglucosyl-DAG (3-O-(beta-D-glucopyranosyl-beta-(1-&gt;6)-D-glucopyranosyl)-1,2-diacyl-sn-glycerol). Beta-diglucosyl-DAG is the predominant glycolipid found in Bacillales and is also used as a membrane anchor for lipoteichoic acid (LTA). In Staphylococcus aureus (strain MRSA252), this protein is Processive diacylglycerol beta-glucosyltransferase.